Reading from the N-terminus, the 479-residue chain is Ribosomal RNA small subunit methyltransferase F (479 aa).

Residues 125-131 (AAAPGSK), Glu-149, Asp-176, and Asp-194 each bind S-adenosyl-L-methionine. The active-site Nucleophile is the Cys-247.

It belongs to the class I-like SAM-binding methyltransferase superfamily. RsmB/NOP family.

The protein resides in the cytoplasm. It carries out the reaction cytidine(1407) in 16S rRNA + S-adenosyl-L-methionine = 5-methylcytidine(1407) in 16S rRNA + S-adenosyl-L-homocysteine + H(+). Functionally, specifically methylates the cytosine at position 1407 (m5C1407) of 16S rRNA. The chain is Ribosomal RNA small subunit methyltransferase F from Salmonella paratyphi A (strain ATCC 9150 / SARB42).